A 999-amino-acid polypeptide reads, in one-letter code: Caspase recruitment domain-containing protein 14 (999 aa).

Residues 15–107 enclose the CARD domain; it reads DEEMLWDMLE…DVYTLVTGLQ (93 aa). Positions 125–411 form a coiled coil; sequence TECLAGAISS…QLRRLQAEAP (287 aa). The segment at 409–565 is maintains the protein in an inactive state; sequence EAPGGPKQEA…RRPARKILSQ (157 aa). A Phosphoserine modification is found at serine 541. Residues 572 to 655 form the PDZ domain; it reads QGDALLEQIG…SCYLSVKINT (84 aa). Positions 803–986 constitute a Guanylate kinase-like domain; that stretch reads SESCFTLAPY…LLSCVRLAIA (184 aa).

Interacts (via CARD domain) with BCL10 (via CARD domain). Forms a complex with MALT1 and BCL10; resulting in the formation of a CBM (CARD14-BLC10-MALT1) complex. Interacts with TRAF2, TRAF3 and TRAF6.

It is found in the cytoplasm. In terms of biological role, acts as a scaffolding protein that can activate the inflammatory transcription factor NF-kappa-B and p38/JNK MAP kinase signaling pathways. Forms a signaling complex with BCL10 and MALT1, and activates MALT1 proteolytic activity and inflammatory gene expression. MALT1 is indispensable for CARD14-induced activation of NF-kappa-B and p38/JNK MAP kinases. May play a role in signaling mediated by TRAF2, TRAF3 and TRAF6 and protects cells against apoptosis. This chain is Caspase recruitment domain-containing protein 14 (Card14), found in Mus musculus (Mouse).